A 782-amino-acid chain; its full sequence is Protein bicaudal D (782 aa).

Residues 15–77 (VQDLQMEVER…RHELDITQEA (63 aa)) are a coiled coil. Residue Ser-103 is modified to Phosphoserine. A coiled-coil region spans residues 107 to 249 (ETSLNLQIFD…LETLQGEREA (143 aa)). Residues Ser-285, Ser-288, and Ser-305 each carry the phosphoserine modification. Thr-306 is modified (phosphothreonine). The residue at position 310 (Ser-310) is a Phosphoserine. Coiled-coil stretches lie at residues 320–368 (SEIH…FMSR) and 444–477 (TTTLRNEVTNLKNKLLATEQKSLDLQSDVQTLTH). Ser-528 is subject to Phosphoserine. Coiled-coil stretches lie at residues 603-630 (EKVNTEEMEELQEQIVKLKSLLSVKREQ) and 695-743 (CEEY…MEMD). The interaction with Rab6 stretch occupies residues 699-722 (VTQVDDLNRQLEAAEEEKKTLNQL). A disordered region spans residues 744-782 (REMRHVRRPMPAQRGTSGKSSFSTRPSSRNPASSNANPF). Over residues 757–767 (RGTSGKSSFST) the composition is skewed to polar residues. The span at 768–782 (RPSSRNPASSNANPF) shows a compositional bias: low complexity.

It belongs to the BicD family. In terms of assembly, may homodimerize but does not interact with BicDR. Interacts (via C-terminal domain) with Rab6. As to expression, in ovaries, expressed in oocyte and nurse cells.

Its subcellular location is the cytoplasm. It is found in the cytoskeleton. Its function is as follows. This protein is essential for differentiation. It may play a role in localizing of Nanos (a maternal determinant) activity in oocytes. Functions redundantly with BicDR. During oogenesis, plays a specific role, together with Rab6 but independently of Sec5, in the polarization of the oocyte microtubule cytoskeleton, in oskar mRNA localization and in the anterodorsal secretion of grk. Plays a role in the biogenesis of annulate lamellae containing nuclear pore complex components. During macrochaetae development, together with BicDR, involved in Rab 6 and Spn-F stability and distribution and actin cytoskeleton organization. This Drosophila melanogaster (Fruit fly) protein is Protein bicaudal D.